The primary structure comprises 292 residues: Elongation factor Ts (292 aa).

Residues 80–83 (TDFV) form an involved in Mg(2+) ion dislocation from EF-Tu region.

This sequence belongs to the EF-Ts family.

Its subcellular location is the cytoplasm. Its function is as follows. Associates with the EF-Tu.GDP complex and induces the exchange of GDP to GTP. It remains bound to the aminoacyl-tRNA.EF-Tu.GTP complex up to the GTP hydrolysis stage on the ribosome. The protein is Elongation factor Ts of Oenococcus oeni (strain ATCC BAA-331 / PSU-1).